Reading from the N-terminus, the 565-residue chain is Ubiquitin carboxyl-terminal hydrolase 39 (565 aa).

Composition is skewed to basic and acidic residues over residues 1 to 21 and 28 to 39; these read MSGRSKRESRGSTRGKRESES and VKRERDREREPE. Disordered stretches follow at residues 1–61 and 75–95; these read MSGR…SARE and EREVDEDSEPEREVRAKNGRV. Ser46 carries the phosphoserine modification. Residue Lys51 forms a Glycyl lysine isopeptide (Lys-Gly) (interchain with G-Cter in SUMO2) linkage. Position 82 is a phosphoserine (Ser82). Positions 85-95 are enriched in basic and acidic residues; sequence EREVRAKNGRV. The UBP-type; degenerate zinc finger occupies 103 to 200; it reads RHCPYLDTIN…YVLKPTFTKQ (98 aa). Residues Cys136, Cys139, His155, and His161 each coordinate Zn(2+). Residues 225–555 enclose the USP domain; it reads VGLNNIKAND…EAYIQIWKRR (331 aa).

It belongs to the peptidase C19 family. As to quaternary structure, the U4/U6-U5 tri-snRNP complex is a building block of the precatalytic spliceosome (spliceosome B complex). Component of the U4/U6-U5 tri-snRNP complex composed of the U4, U6 and U5 snRNAs and at least PRPF3, PRPF4, PRPF6, PRPF8, PRPF31, SNRNP200, TXNL4A, SNRNP40, SNRPB, SNRPD1, SNRPD2, SNRPD3, SNRPE, SNRPF, SNRPG, DDX23, CD2BP2, PPIH, SNU13, EFTUD2, SART1 and USP39, plus LSM2, LSM3, LSM4, LSM5, LSM6, LSM7 and LSM8.

Its subcellular location is the nucleus. It catalyses the reaction Thiol-dependent hydrolysis of ester, thioester, amide, peptide and isopeptide bonds formed by the C-terminal Gly of ubiquitin (a 76-residue protein attached to proteins as an intracellular targeting signal).. Its function is as follows. Deubiquitinating enzyme that plays a role in many cellular processes including cellular antiviral response, epithelial morphogenesis, DNA repair or B-cell development. Plays a role in pre-mRNA splicing as a component of the U4/U6-U5 tri-snRNP, one of the building blocks of the precatalytic spliceosome. Specifically regulates immunoglobulin gene rearrangement in a spliceosome-dependent manner, which involves modulating chromatin interactions at the Igh locus and therefore plays an essential role in B-cell development. Regulates AURKB mRNA levels, and thereby plays a role in cytokinesis and in the spindle checkpoint. Regulates apoptosis and G2/M cell cycle checkpoint in response to DNA damage by deubiquitinating and stabilizing CHK2. Also plays an important role in DNA repair by controlling the recruitment of XRCC4/LIG4 to DNA double-strand breaks for non-homologous end-joining repair. Participates in antiviral activity by affecting the type I IFN signaling by stabilizing STAT1 and decreasing its 'Lys-6'-linked ubiquitination. Contributes to non-canonical Wnt signaling during epidermal differentiation. Acts as a negative regulator NF-kappa-B activation through deubiquitination of 'Lys-48'-linked ubiquitination of NFKBIA. This Homo sapiens (Human) protein is Ubiquitin carboxyl-terminal hydrolase 39.